The chain runs to 349 residues: S-adenosylmethionine:tRNA ribosyltransferase-isomerase (349 aa).

Belongs to the QueA family. Monomer.

It localises to the cytoplasm. It carries out the reaction 7-aminomethyl-7-carbaguanosine(34) in tRNA + S-adenosyl-L-methionine = epoxyqueuosine(34) in tRNA + adenine + L-methionine + 2 H(+). Its pathway is tRNA modification; tRNA-queuosine biosynthesis. In terms of biological role, transfers and isomerizes the ribose moiety from AdoMet to the 7-aminomethyl group of 7-deazaguanine (preQ1-tRNA) to give epoxyqueuosine (oQ-tRNA). The sequence is that of S-adenosylmethionine:tRNA ribosyltransferase-isomerase from Ruegeria pomeroyi (strain ATCC 700808 / DSM 15171 / DSS-3) (Silicibacter pomeroyi).